The chain runs to 476 residues: Ribulose bisphosphate carboxylase large chain (476 aa).

A propeptide spanning residues 1–2 (MS) is cleaved from the precursor. At P3 the chain carries N-acetylproline. K14 is subject to N6,N6,N6-trimethyllysine. Residues N123 and T173 each coordinate substrate. K175 serves as the catalytic Proton acceptor. Residue K177 coordinates substrate. Mg(2+)-binding residues include K201, D203, and E204. K201 is modified (N6-carboxylysine). H294 acts as the Proton acceptor in catalysis. 3 residues coordinate substrate: R295, H327, and S379.

It belongs to the RuBisCO large chain family. Type I subfamily. Heterohexadecamer of 8 large chains and 8 small chains; disulfide-linked. The disulfide link is formed within the large subunit homodimers. Mg(2+) serves as cofactor. In terms of processing, the disulfide bond which can form in the large chain dimeric partners within the hexadecamer appears to be associated with oxidative stress and protein turnover.

Its subcellular location is the plastid. It is found in the chloroplast. It catalyses the reaction 2 (2R)-3-phosphoglycerate + 2 H(+) = D-ribulose 1,5-bisphosphate + CO2 + H2O. The enzyme catalyses D-ribulose 1,5-bisphosphate + O2 = 2-phosphoglycolate + (2R)-3-phosphoglycerate + 2 H(+). In terms of biological role, ruBisCO catalyzes two reactions: the carboxylation of D-ribulose 1,5-bisphosphate, the primary event in carbon dioxide fixation, as well as the oxidative fragmentation of the pentose substrate in the photorespiration process. Both reactions occur simultaneously and in competition at the same active site. The chain is Ribulose bisphosphate carboxylase large chain from Sorghum bicolor (Sorghum).